A 513-amino-acid chain; its full sequence is MAVITEENSNNLFCTDSLELTSNKQDDQVISNYLKPVRSYPYIKYSRSSLLLTASTTLPENFVISFTNSIESEESDKSDYLLDHAHSLQELSTTHSSLSSTLTSMSEESSSTESKFATLNDGINGGNPYSRLYRKNPSSDPNDIPPQFHFKKKSKSFYSSMYDKMKIRINILPNGNDNFIKKRNSGFALAPIACYNHTSDLRKLLKHKVTGSNASIFKRINPRSRKRVVNPECSVTDTPYGKLNNVIGEGASSFIRVINDRNKLPIYVAKVFRPPLDTSLLRRYVRYFIAEYTFASTLRHPNIIKVLDIIYKRHTILQIIEYVPYDLFTFITKGHCSALKADQMFFQLLDGVAYMHSLGIAHRDIKLDNIMLDENLNVKIIDFGTAFVFHYPFESTTLMSDGVVGSKPYVAPEVLTQKPYDPSAVDVWSCAIVYCCIALKRFPWKVPHTSDKRFNLYVTQRNDPNTKSQLIESLPMNSRDTIYHMLDIDFNTRCSISGARSTTWMQQVRKTLI.

Over residues 98-114 (LSSTLTSMSEESSSTES) the composition is skewed to low complexity. The tract at residues 98–120 (LSSTLTSMSEESSSTESKFATLN) is disordered. The Protein kinase domain maps to 241-505 (GKLNNVIGEG…ISGARSTTWM (265 aa)). ATP contacts are provided by residues 247–255 (IGEGASSFI) and lysine 270. The active-site Proton acceptor is the aspartate 364.

It belongs to the protein kinase superfamily. Ser/Thr protein kinase family.

The protein resides in the cytoplasm. It is found in the nucleus. It carries out the reaction L-seryl-[protein] + ATP = O-phospho-L-seryl-[protein] + ADP + H(+). It catalyses the reaction L-threonyl-[protein] + ATP = O-phospho-L-threonyl-[protein] + ADP + H(+). This is Serine/threonine-protein kinase ppk8 (ppk8) from Schizosaccharomyces pombe (strain 972 / ATCC 24843) (Fission yeast).